The sequence spans 155 residues: MASRSAGSLITHNNVTYIPPALMPGYRGHIPSASFTYGDTYGNTSARCFQDFRSTVLNSSRSPYCQGGQFPTSHSNDPALVIGHRSRGWDRFLHSPSWSRYNVDFKRSDELKQFHRAAEQHRDHYRDKSGTAHQVPHFIVPVKNPQTFPLPQQVL.

This sequence belongs to the CIMIP2 family.

It is found in the cytoplasm. The protein localises to the cytoskeleton. The protein resides in the cilium axoneme. Its function is as follows. Microtubule inner protein (MIP) part of the dynein-decorated doublet microtubules (DMTs) in cilia axoneme, which is required for motile cilia beating. This Xenopus laevis (African clawed frog) protein is Ciliary microtubule inner protein 2C (cimip2cb).